We begin with the raw amino-acid sequence, 509 residues long: 2,3-bisphosphoglycerate-independent phosphoglycerate mutase (509 aa).

Position 11 (aspartate 11) interacts with Mn(2+). At tyrosine 35 the chain carries Phosphotyrosine. Serine 61 contacts Mn(2+). Catalysis depends on serine 61, which acts as the Phosphoserine intermediate. Residues histidine 122, 152-153, arginine 184, arginine 190, 260-263, and lysine 335 contribute to the substrate site; these read RD and RPDR. Mn(2+)-binding residues include aspartate 402, histidine 406, aspartate 443, histidine 444, and histidine 461.

It belongs to the BPG-independent phosphoglycerate mutase family. Monomer. Mn(2+) serves as cofactor.

The catalysed reaction is (2R)-2-phosphoglycerate = (2R)-3-phosphoglycerate. It participates in carbohydrate degradation; glycolysis; pyruvate from D-glyceraldehyde 3-phosphate: step 3/5. Functionally, essential for rapid growth and for sporulation. Catalyzes the interconversion of 2-phosphoglycerate and 3-phosphoglycerate. The sequence is that of 2,3-bisphosphoglycerate-independent phosphoglycerate mutase from Bacillus anthracis.